Reading from the N-terminus, the 238-residue chain is Leucyl/phenylalanyl-tRNA--protein transferase (238 aa).

This sequence belongs to the L/F-transferase family.

The protein resides in the cytoplasm. It carries out the reaction N-terminal L-lysyl-[protein] + L-leucyl-tRNA(Leu) = N-terminal L-leucyl-L-lysyl-[protein] + tRNA(Leu) + H(+). The catalysed reaction is N-terminal L-arginyl-[protein] + L-leucyl-tRNA(Leu) = N-terminal L-leucyl-L-arginyl-[protein] + tRNA(Leu) + H(+). The enzyme catalyses L-phenylalanyl-tRNA(Phe) + an N-terminal L-alpha-aminoacyl-[protein] = an N-terminal L-phenylalanyl-L-alpha-aminoacyl-[protein] + tRNA(Phe). Functionally, functions in the N-end rule pathway of protein degradation where it conjugates Leu, Phe and, less efficiently, Met from aminoacyl-tRNAs to the N-termini of proteins containing an N-terminal arginine or lysine. The sequence is that of Leucyl/phenylalanyl-tRNA--protein transferase from Pseudoalteromonas translucida (strain TAC 125).